A 239-amino-acid chain; its full sequence is MKNDVISPEFDENGRPLRRIRSFVRRQGRLTKGQEHALENYWPVMGVEFSEDMLDFPALFGREAPVTLEIGFGMGASLVAMAKDRPEQDFLGIEVHSPGVGACLASAHEEGLSNLHVMCHDAVEVLHKMIPDNSLRMVQLFFPDPWHKARHNKRRIVQVPFAELVKSKLQLGGVFHMATDWEPYAEHMLEVMSSIDGYKNLSESNDYVPRPASRPVTKFEQRGHRLGHGVWDLMFERVK.

S-adenosyl-L-methionine contacts are provided by E69, E94, D121, and D144. Residue D144 is part of the active site. Residue K148 coordinates substrate. Residues 150 to 155 (RHNKRR) form an interaction with RNA region. Residues D180 and 217 to 220 (TKFE) each bind substrate.

The protein belongs to the class I-like SAM-binding methyltransferase superfamily. TrmB family. In terms of assembly, monomer.

It catalyses the reaction guanosine(46) in tRNA + S-adenosyl-L-methionine = N(7)-methylguanosine(46) in tRNA + S-adenosyl-L-homocysteine. Its pathway is tRNA modification; N(7)-methylguanine-tRNA biosynthesis. Its function is as follows. Catalyzes the formation of N(7)-methylguanine at position 46 (m7G46) in tRNA. This chain is tRNA (guanine-N(7)-)-methyltransferase, found in Shigella dysenteriae serotype 1 (strain Sd197).